The chain runs to 152 residues: UPF0178 protein KPN78578_03210 (152 aa).

The protein belongs to the UPF0178 family.

The chain is UPF0178 protein KPN78578_03210 from Klebsiella pneumoniae subsp. pneumoniae (strain ATCC 700721 / MGH 78578).